A 315-amino-acid chain; its full sequence is MTKRFKLKISRILSFKSCRLKDPSSLPFNPVSSSLRRTSPLVNSSADVTTVPQRRRSSFRLHVLTVFGCGRSSTPLDVDLRNSPVLSPPQTPTFQWESEGKWHVIAQVTEEEYETPRRKIYNGGSEKDNRRRLKKKEKSNSRRRGSISSAEEETDRESLLPSSTNLSPEYSSSELPRVTRRPRQLLKKAVIEEESESSSPPPSPARLSSFVQRLMPCTMAAAVMVEGVAVVKKSEDPYEDFKGSMMEMIVEKKMFEVAELEQLLSCFLSLNAKRHHRAIVRAFSEIWVALFSGGSGGGRRSSSFSSVRLSDYDEC.

Residues 113–183 form a disordered region; the sequence is YETPRRKIYN…ELPRVTRRPR (71 aa). Positions 130-145 are enriched in basic residues; sequence RRRLKKKEKSNSRRRG. The segment covering 160–174 has biased composition (polar residues); the sequence is LPSSTNLSPEYSSSE. One can recognise an OVATE domain in the interval 230-289; sequence VVKKSEDPYEDFKGSMMEMIVEKKMFEVAELEQLLSCFLSLNAKRHHRAIVRAFSEIWVA.

Expressed in roots, shoots, stems, flower buds and siliques.

It is found in the nucleus. Transcriptional repressor that regulates multiple aspects of plant growth and development through the regulation of BEL1-LIKE (BLH) and KNOX TALE (KNAT) homeodomain transcription factors. The sequence is that of Transcription repressor OFP7 (OFP7) from Arabidopsis thaliana (Mouse-ear cress).